Reading from the N-terminus, the 639-residue chain is Tubulin--tyrosine ligase-like protein 12 (639 aa).

Residues 295–639 (PQGHVFRVHC…TDNCHVTRII (345 aa)) form the TTL domain. ATP-binding positions include 445 to 448 (SKYI), Lys463, and Asp465.

Belongs to the tubulin--tyrosine ligase family. As to quaternary structure, interacts with MAVS; the interaction prevents MAVS binding to TBK1 and IKBKE. Interacts (via N-terminus) with TBK1 (via protein kinase domain). Interacts (via TTL domain) with IKBKE (via protein kinase domain). Interacts with tubulin alpha. Interacts with histone H3 and histone H4 (when trimethylated at 'Lys-20' (H4K20me3)). Interacts with CBX3. As to expression, widely expressed with highest levels in brain, kidney, liver, lung, muscle and testis.

It is found in the cytoplasm. It localises to the midbody. The protein localises to the cytoskeleton. Its subcellular location is the microtubule organizing center. The protein resides in the centrosome. It is found in the spindle. It localises to the nucleus. Negatively regulates post-translational modifications of tubulin, including detyrosination of the C-terminus and polyglutamylation of glutamate residues. Also, indirectly promotes histone H4 trimethylation at 'Lys-20' (H4K20me3). Probably by controlling tubulin and/or histone H4 post-translational modifications, plays a role in mitosis and in maintaining chromosome number stability. During RNA virus-mediated infection, acts as a negative regulator of the RIG-I pathway by preventing MAVS binding to TBK1 and IKBKE. In Mus musculus (Mouse), this protein is Tubulin--tyrosine ligase-like protein 12.